Reading from the N-terminus, the 336-residue chain is tRNA-splicing endonuclease (336 aa).

Residues Tyr271, His282, and Lys313 contribute to the active site.

Belongs to the tRNA-intron endonuclease family. Archaeal long subfamily. In terms of assembly, homodimer.

The catalysed reaction is pretRNA = a 3'-half-tRNA molecule with a 5'-OH end + a 5'-half-tRNA molecule with a 2',3'-cyclic phosphate end + an intron with a 2',3'-cyclic phosphate and a 5'-hydroxyl terminus.. Functionally, endonuclease that removes tRNA introns. Cleaves pre-tRNA at the 5'- and 3'-splice sites to release the intron. The products are an intron and two tRNA half-molecules bearing 2',3' cyclic phosphate and 5'-OH termini. Recognizes a pseudosymmetric substrate in which 2 bulged loops of 3 bases are separated by a stem of 4 bp. In Natronomonas pharaonis (strain ATCC 35678 / DSM 2160 / CIP 103997 / JCM 8858 / NBRC 14720 / NCIMB 2260 / Gabara) (Halobacterium pharaonis), this protein is tRNA-splicing endonuclease.